Here is a 406-residue protein sequence, read N- to C-terminus: Arginine deiminase (406 aa).

C396 serves as the catalytic Amidino-cysteine intermediate.

Belongs to the arginine deiminase family.

It localises to the cytoplasm. The enzyme catalyses L-arginine + H2O = L-citrulline + NH4(+). Its pathway is amino-acid degradation; L-arginine degradation via ADI pathway; carbamoyl phosphate from L-arginine: step 1/2. The sequence is that of Arginine deiminase from Salmonella typhimurium (strain LT2 / SGSC1412 / ATCC 700720).